A 67-amino-acid polypeptide reads, in one-letter code: Small ribosomal subunit protein bS21 (67 aa).

Belongs to the bacterial ribosomal protein bS21 family.

The protein is Small ribosomal subunit protein bS21 of Granulibacter bethesdensis (strain ATCC BAA-1260 / CGDNIH1).